The sequence spans 189 residues: Blue copper protein (189 aa).

Residues 1–24 (MAFSNALVLCFLLAIINMALPSLA) form the signal peptide. The region spanning 25 to 124 (TVYTVGDTSG…GMKLSIKVKA (100 aa)) is the Phytocyanin domain. Cu cation is bound by residues His-65, Cys-106, and His-111. A disulfide bridge links Cys-78 with Cys-106. Residues 127–160 (GSSAAPSATPSSSGKGSPSSDDTPAATTTTTTPT) are compositionally biased toward low complexity. Positions 127-165 (GSSAAPSATPSSSGKGSPSSDDTPAATTTTTTPTKQNES) are disordered. A glycan (N-linked (GlcNAc...) asparagine) is linked at Asn-163.

The polypeptide is Blue copper protein (Pisum sativum (Garden pea)).